Consider the following 603-residue polypeptide: Carbon catabolite repressor protein 4 homolog 2 (603 aa).

Positions 115-136 (ENNANEDDDLNRNNSAGSGSLA) are disordered. The segment covering 126-136 (RNNSAGSGSLA) has biased composition (low complexity). Residue Glu302 coordinates Mg(2+).

This sequence belongs to the CCR4/nocturin family. Component of the CCR4-NOT complex, at least composed of CRR4 and CAF1 proteins. Mg(2+) is required as a cofactor.

The protein localises to the nucleus. It localises to the cytoplasm. It carries out the reaction Exonucleolytic cleavage of poly(A) to 5'-AMP.. Its function is as follows. Acts as a catalytic component of the CCR4-NOT core complex, which in the nucleus seems to be a general transcription factor, and in the cytoplasm the major mRNA deadenylase involved in mRNA turnover. In Arabidopsis thaliana (Mouse-ear cress), this protein is Carbon catabolite repressor protein 4 homolog 2 (CCR4-2).